Here is a 695-residue protein sequence, read N- to C-terminus: G-patch and R3H domain-containing protein C30B4.02c (695 aa).

6 disordered regions span residues serine 168 to serine 200, aspartate 213 to isoleucine 242, phenylalanine 257 to glycine 317, glycine 332 to glutamate 351, aspartate 388 to arginine 448, and aspartate 475 to asparagine 517. Residues cysteine 182–aspartate 198 are compositionally biased toward basic and acidic residues. Acidic residues-rich tracts occupy residues valine 262–glutamate 286, glutamate 307–glycine 317, and leucine 337–glutamate 351. The segment covering lysine 421–glutamine 434 has biased composition (basic residues). The 63-residue stretch at lysine 525–histidine 587 folds into the R3H domain. Residues lysine 652–glycine 695 form the G-patch domain.

Its subcellular location is the cytoplasm. This is G-patch and R3H domain-containing protein C30B4.02c from Schizosaccharomyces pombe (strain 972 / ATCC 24843) (Fission yeast).